We begin with the raw amino-acid sequence, 394 residues long: Elongation factor Tu (394 aa).

The tr-type G domain occupies 10 to 204; sequence KPHVNVGTIG…ALDSYIPEPE (195 aa). Residues 19–26 are G1; it reads GHVDHGKT. 19–26 provides a ligand contact to GTP; sequence GHVDHGKT. T26 is a binding site for Mg(2+). A G2 region spans residues 60-64; sequence GITIN. A G3 region spans residues 81-84; the sequence is DCPG. Residues 81–85 and 136–139 each bind GTP; these read DCPGH and NKCD. Residues 136 to 139 are G4; that stretch reads NKCD. The G5 stretch occupies residues 174 to 176; the sequence is SAL.

It belongs to the TRAFAC class translation factor GTPase superfamily. Classic translation factor GTPase family. EF-Tu/EF-1A subfamily. Monomer.

The protein localises to the cytoplasm. It carries out the reaction GTP + H2O = GDP + phosphate + H(+). Functionally, GTP hydrolase that promotes the GTP-dependent binding of aminoacyl-tRNA to the A-site of ribosomes during protein biosynthesis. This is Elongation factor Tu from Sodalis glossinidius (strain morsitans).